Consider the following 131-residue polypeptide: Antiholin (131 aa).

At 1–14 the chain is on the periplasmic side; the sequence is MKMIAWMQHFLETD. Cytoplasmic-side segments run 1–52 and 38–49; these read MKMI…SSFK and LFAKLNPNIKFS. A helical transmembrane segment spans residues 15-37; sequence ETKLIYWLTFLMVCMVVDTVLGV. Residues 53–75 form a helical membrane-spanning segment; it reads IKTGVLIKVSEMILALLAIPFAV. Topologically, residues 76–78 are periplasmic; the sequence is PFP. The chain crosses the membrane as a helical span at residues 79–101; the sequence is AGLPLLYTVYTALCVSEIYSIFG. Topologically, residues 102–131 are cytoplasmic; it reads HLRLVDDKSDFLEILENFFKRTSGKNKEEK.

The protein belongs to the bacteriophage holin family. phi29likevirus holin subfamily. In terms of assembly, homomultimer. Interacts with isoform Antiholin; this interaction blocks the holin homomultimerization and delays host cell lysis.

It localises to the host cell inner membrane. Accumulates harmlessly in the cytoplasmic membrane until it reaches a critical concentration that triggers the formation of micron-scale pores (holes) causing host cell membrane disruption and endolysin escape into the periplasmic space. Determines the precise timing of host cell lysis. Participates with the endolysin and spanin proteins in the sequential events which lead to the programmed host cell lysis releasing the mature viral particles from the host cell. Functionally, counteracts the aggregation of the holin molecules and thus of pore formation. The chain is Antiholin (14) from Bacillus subtilis (Bacteriophage phi-29).